Consider the following 250-residue polypeptide: Deoxynucleoside-5'-monophosphate kinase (250 aa).

ATP is bound by residues glycine 14, aspartate 16, and threonine 17. DGMP is bound by residues valine 44, lysine 65, arginine 130, glycine 137, threonine 138, tryptophan 150, aspartate 170, arginine 172, glutamate 176, and serine 210.

This sequence belongs to the dNMP kinase family. Monomer.

It catalyses the reaction a 2'-deoxyribonucleoside 5'-phosphate + ATP = a 2'-deoxyribonucleoside 5'-diphosphate + ADP. Functionally, allows the synthesis of deoxyribonucleoside triphosphates necessary for the rapid viral DNA replication. Phosphorylates all four dNMPs. The enzyme had the highest activity with dAMP and had about 30% less activity with dTMP and dGMP, respectively. The lowest activity was observed with dCMP as the substrate (about 35% of that with dAMP). The protein is Deoxynucleoside-5'-monophosphate kinase of Escherichia coli (Enterobacteria phage T5).